We begin with the raw amino-acid sequence, 117 residues long: Ribonuclease P protein component (117 aa).

It belongs to the RnpA family. In terms of assembly, consists of a catalytic RNA component (M1 or rnpB) and a protein subunit.

It carries out the reaction Endonucleolytic cleavage of RNA, removing 5'-extranucleotides from tRNA precursor.. Its function is as follows. RNaseP catalyzes the removal of the 5'-leader sequence from pre-tRNA to produce the mature 5'-terminus. It can also cleave other RNA substrates such as 4.5S RNA. The protein component plays an auxiliary but essential role in vivo by binding to the 5'-leader sequence and broadening the substrate specificity of the ribozyme. The chain is Ribonuclease P protein component from Thermotoga petrophila (strain ATCC BAA-488 / DSM 13995 / JCM 10881 / RKU-1).